The following is a 351-amino-acid chain: D-alanine--D-alanine ligase (351 aa).

The region spanning 146-340 is the ATP-grasp domain; the sequence is KEIMLYNNIK…YEDLCESIVL (195 aa). 173-226 provides a ligand contact to ATP; the sequence is AFDYPMVVKPNSGGSSIGTRIVHDEAELAESLKDAYRFDDEIIVEEFITGREFS. Mg(2+) contacts are provided by Asp-295, Glu-307, and Asn-309.

The protein belongs to the D-alanine--D-alanine ligase family. Mg(2+) serves as cofactor. It depends on Mn(2+) as a cofactor.

It localises to the cytoplasm. The enzyme catalyses 2 D-alanine + ATP = D-alanyl-D-alanine + ADP + phosphate + H(+). It participates in cell wall biogenesis; peptidoglycan biosynthesis. In terms of biological role, cell wall formation. This chain is D-alanine--D-alanine ligase, found in Pediococcus pentosaceus (strain ATCC 25745 / CCUG 21536 / LMG 10740 / 183-1w).